Here is a 303-residue protein sequence, read N- to C-terminus: Methionyl-tRNA formyltransferase (303 aa).

A (6S)-5,6,7,8-tetrahydrofolate-binding site is contributed by 108–111 (SDLP).

The protein belongs to the Fmt family.

The catalysed reaction is L-methionyl-tRNA(fMet) + (6R)-10-formyltetrahydrofolate = N-formyl-L-methionyl-tRNA(fMet) + (6S)-5,6,7,8-tetrahydrofolate + H(+). In terms of biological role, attaches a formyl group to the free amino group of methionyl-tRNA(fMet). The formyl group appears to play a dual role in the initiator identity of N-formylmethionyl-tRNA by promoting its recognition by IF2 and preventing the misappropriation of this tRNA by the elongation apparatus. The polypeptide is Methionyl-tRNA formyltransferase (Rickettsia felis (strain ATCC VR-1525 / URRWXCal2) (Rickettsia azadi)).